We begin with the raw amino-acid sequence, 713 residues long: Mitochondrial intermediate peptidase (713 aa).

The N-terminal 35 residues, 1 to 35, are a transit peptide targeting the mitochondrion; that stretch reads MLCVGRLGGLGARAAALPPRRAGRGSLEAGIRARR. Lys126 carries the N6-acetyllysine modification. His495 is a binding site for Zn(2+). Glu496 is a catalytic residue. Zn(2+)-binding residues include His499 and His502.

It belongs to the peptidase M3 family. In terms of assembly, monomer. It depends on Zn(2+) as a cofactor.

Its subcellular location is the mitochondrion matrix. The enzyme catalyses Release of an N-terminal octapeptide as second stage of processing of some proteins imported into the mitochondrion.. Its activity is regulated as follows. Activity is divalent cation-dependent. It is stimulated by manganese, magnesium or calcium ions and reversibly inhibited by zinc, cobalt and iron. Cleaves proteins, imported into the mitochondrion, to their mature size. This chain is Mitochondrial intermediate peptidase (MIPEP), found in Homo sapiens (Human).